The chain runs to 707 residues: Serine/threonine protein kinase UL97 (707 aa).

Residues 1 to 14 show a composition bias toward low complexity; the sequence is MSSALRSRARSASL. Disordered stretches follow at residues 1–32, 115–146, 176–199, and 231–264; these read MSSALRSRARSASLGTTTEGWDPPPLRRPSRA, EKEDAASDKENLRRPVVPSTSSRGSAASGDGY, FTGGSDPSDSVSGVRGGRKRPLRP, and ESQDSAVASGPGRVPQPLSGSSGEESATAVEADS. Over residues 115–127 the composition is skewed to basic and acidic residues; the sequence is EKEDAASDKENLR. Low complexity predominate over residues 178–188; that stretch reads GGSDPSDSVSG. ATP contacts are provided by residues 337 to 345 and K359; that span reads LGQGSFGEV. The Proton acceptor role is filled by D456.

It belongs to the protein kinase superfamily. Tyr protein kinase family. HCMV ganciclovir subfamily. In terms of assembly, interacts with UL83. Post-translationally, autophosphorylates on serine and threonine residues.

The protein resides in the virion. It catalyses the reaction L-seryl-[protein] + ATP = O-phospho-L-seryl-[protein] + ADP + H(+). It carries out the reaction L-threonyl-[protein] + ATP = O-phospho-L-threonyl-[protein] + ADP + H(+). Its function is as follows. Serine/threonine protein kinase that plays important roles in several processes including nuclear viral egress, viral replication or regulation of host cell cycle progression. Participates in the acquisition of tegument during virion morphogenesis in the nucleus. Redistributes the host nuclear lamina by phosphorylating cellular Lamins-A/C. Plays a role in viral DNA synthesis by phosphorylating the DNA polymerase processivity factor UL44. Stimulates host cell cycle to support viral DNA synthesis by phosphorylating host retinoblastoma/RB1 protein. Additional substrates have been identified including host EF1D or H2B. Also phosphorylates host SAMHD1 and thereby counteracts its antiviral effect by reducing its dNTP hydrolase activity. This chain is Serine/threonine protein kinase UL97 (UL97), found in Human cytomegalovirus (strain Towne) (HHV-5).